Consider the following 296-residue polypeptide: Giardin subunit alpha-4 (296 aa).

Annexin repeat units follow at residues 3-72 (ATVS…VHAW), 74-146 (SRFE…GWVK), 153-223 (KSIK…AHHW), and 226-294 (DPGQ…VFWR).

It belongs to the annexin family. Giardin subunit alpha subfamily.

The protein localises to the cytoplasm. The protein resides in the cytoskeleton. Its function is as follows. Giardins are involved in parasite attachment to the intestinal mucosa and in the cytoskeletal disassembly and reassembly that marks the transition from infectious trophozoite to transmissible cyst. They may interact with other cytoskeletal proteins such as microtubules in the microribbons or crossbridges, to maintain the integrity of the ventral disk. The sequence is that of Giardin subunit alpha-4 from Giardia intestinalis (Giardia lamblia).